The sequence spans 989 residues: Phosphoenolpyruvate carboxylase (989 aa).

Active-site residues include His-175 and Lys-630.

It belongs to the PEPCase type 1 family. It depends on Mg(2+) as a cofactor.

It catalyses the reaction oxaloacetate + phosphate = phosphoenolpyruvate + hydrogencarbonate. Functionally, forms oxaloacetate, a four-carbon dicarboxylic acid source for the tricarboxylic acid cycle. The protein is Phosphoenolpyruvate carboxylase of Prochlorococcus marinus (strain MIT 9312).